A 358-amino-acid polypeptide reads, in one-letter code: Short chain dehydrogenase sor7 (358 aa).

The segment at 1 to 22 (MSSPAIGQPPIPPTPTDANISG) is disordered. The NADP(+) site is built by Leu-34, Asp-88, Asn-115, Tyr-206, Lys-210, Val-238, and Thr-240. The active-site Proton donor is Tyr-206. Lys-210 acts as the Lowers pKa of active site Tyr in catalysis.

Belongs to the short-chain dehydrogenases/reductases (SDR) family.

Its pathway is secondary metabolite biosynthesis. Functionally, short chain dehydrogenase; part of the SOR gene cluster that mediates the biosynthesis of sorbicillinoids, a diverse group of yellow secondary metabolites that restrict growth of competing pathogenic fungi but not of bacteria. Sorbicillinoids biosynthesis requires the action of two PKSs. The SOR cluster is required for the production of trichodimerol and dihydrotrichotetronin, with sor2 being sufficient for production of trichodimerol, but not dihydrotrichotetronin in the light. Sor1 iteratively combines three acetyl units and the growing chain is modified by the ketoacyl reductase subunit, and optional by the enoyl reductase subunit in the second cycle. The polyketide is then handed over to the PKS sor2, which adds three more acetyl units, and two methyl groups. Sor2 releases an aldehyde, which undergoes spontaneous cyclization resulting in the formation of sorbicillin or 2',3'-dihydrosorbicillin. The monooxygenase sor5 oxidizes sorbicillin and 2',3'-dihydrosorbicillin to 2',3'-dihydrosorbicillinol and sorbicillinol, respectively. The oxidoreductase sor8 further converts sorbicillinol into oxosorbicillinol. Sorbicillinol is the building block for the other sorbicillinoids such as disorbicillinol, bisvertinolon, dihydrobisvertinolone, and dihydrotrichotetronine. The sequence is that of Short chain dehydrogenase sor7 from Hypocrea jecorina (strain QM6a) (Trichoderma reesei).